Here is a 515-residue protein sequence, read N- to C-terminus: Recombining binding protein suppressor of hairless-like protein (515 aa).

The disordered stretch occupies residues 1–40; sequence MDPRETTDPSLPPGPLTHLSLPDSSEVRLQSDGPSLLGSW. DNA-binding regions lie at residues 76–86, 191–196, and 218–223; these read QKSYGNEKRFF, SKPSQK, and RLRSQT. Residues 384 to 474 enclose the IPT/TIG domain; the sequence is PLISTLELSG…YPSPFSFTYT (91 aa).

Belongs to the Su(H) family. As to quaternary structure, interacts weakly with EBNA2. Does not interact with any Notch proteins. Highly expressed in lung. Also detected in spleen, and brain.

The protein localises to the nucleus. Functionally, putative transcription factor, which cooperates with EBNA2 to activate transcription. This is Recombining binding protein suppressor of hairless-like protein (Rbpjl) from Mus musculus (Mouse).